The following is a 237-amino-acid chain: Purine nucleoside phosphorylase DeoD-type (237 aa).

Residue H4 participates in a purine D-ribonucleoside binding. Phosphate is bound by residues G20, R24, R43, and 87–90; that span reads RVGT. A purine D-ribonucleoside contacts are provided by residues 179 to 181 and 203 to 204; these read EME and SD. The active-site Proton donor is the D204.

It belongs to the PNP/UDP phosphorylase family. Homohexamer; trimer of homodimers.

The enzyme catalyses a purine D-ribonucleoside + phosphate = a purine nucleobase + alpha-D-ribose 1-phosphate. The catalysed reaction is a purine 2'-deoxy-D-ribonucleoside + phosphate = a purine nucleobase + 2-deoxy-alpha-D-ribose 1-phosphate. Its function is as follows. Catalyzes the reversible phosphorolytic breakdown of the N-glycosidic bond in the beta-(deoxy)ribonucleoside molecules, with the formation of the corresponding free purine bases and pentose-1-phosphate. The protein is Purine nucleoside phosphorylase DeoD-type of Streptococcus uberis (strain ATCC BAA-854 / 0140J).